Here is a 121-residue protein sequence, read N- to C-terminus: Small ribosomal subunit protein uS13 (121 aa).

The disordered stretch occupies residues 92 to 121; it reads RKGLPVRGQSSKTNARTVKGPRKTVANKKK. The span at 110 to 121 shows a compositional bias: basic residues; the sequence is KGPRKTVANKKK.

This sequence belongs to the universal ribosomal protein uS13 family. As to quaternary structure, part of the 30S ribosomal subunit. Forms a loose heterodimer with protein S19. Forms two bridges to the 50S subunit in the 70S ribosome.

Functionally, located at the top of the head of the 30S subunit, it contacts several helices of the 16S rRNA. In the 70S ribosome it contacts the 23S rRNA (bridge B1a) and protein L5 of the 50S subunit (bridge B1b), connecting the 2 subunits; these bridges are implicated in subunit movement. Contacts the tRNAs in the A and P-sites. This chain is Small ribosomal subunit protein uS13, found in Mycoplasma mycoides subsp. mycoides SC (strain CCUG 32753 / NCTC 10114 / PG1).